We begin with the raw amino-acid sequence, 366 residues long: Putative type II methyltransferase M.MjaORF1200P (366 aa).

The 362-residue stretch at Leu5–Lys366 folds into the SAM-dependent MTase C5-type domain. Cys133 is an active-site residue.

Belongs to the class I-like SAM-binding methyltransferase superfamily. C5-methyltransferase family.

The enzyme catalyses a 2'-deoxycytidine in DNA + S-adenosyl-L-methionine = a 5-methyl-2'-deoxycytidine in DNA + S-adenosyl-L-homocysteine + H(+). A putative methylase that probably protects DNA from cleavage by the MjaORF1200P endonuclease. This Methanocaldococcus jannaschii (strain ATCC 43067 / DSM 2661 / JAL-1 / JCM 10045 / NBRC 100440) (Methanococcus jannaschii) protein is Putative type II methyltransferase M.MjaORF1200P.